Consider the following 89-residue polypeptide: MAPKKKWSKGKVKDKAQHATVFDKSIIDRINKEVPAFKFISVSVLVDRMKINGSLARIAIRDLAERGVIQKVDQHSKQAIYTRVPAATA.

This sequence belongs to the eukaryotic ribosomal protein eS25 family. Component of the small ribosomal subunit (SSU). Mature yeast ribosomes consist of a small (40S) and a large (60S) subunit. The 40S small subunit contains 1 molecule of ribosomal RNA (18S rRNA) and at least 33 different proteins. The large 60S subunit contains 3 rRNA molecules (25S, 5.8S and 5S rRNA) and at least 46 different proteins.

The protein resides in the cytoplasm. Component of the ribosome, a large ribonucleoprotein complex responsible for the synthesis of proteins in the cell. The small ribosomal subunit (SSU) binds messenger RNAs (mRNAs) and translates the encoded message by selecting cognate aminoacyl-transfer RNA (tRNA) molecules. The large subunit (LSU) contains the ribosomal catalytic site termed the peptidyl transferase center (PTC), which catalyzes the formation of peptide bonds, thereby polymerizing the amino acids delivered by tRNAs into a polypeptide chain. The nascent polypeptides leave the ribosome through a tunnel in the LSU and interact with protein factors that function in enzymatic processing, targeting, and the membrane insertion of nascent chains at the exit of the ribosomal tunnel. This Schizosaccharomyces pombe (strain 972 / ATCC 24843) (Fission yeast) protein is Small ribosomal subunit protein eS25A (rps2502).